A 279-amino-acid polypeptide reads, in one-letter code: MEKNCGSGQSKLKALRMHIYFEVDFQEQAQHYQAVLHSRGVTVDLQPIEKLNARFLRLNPDLALCVDENGLWLSANGMKMQPDWKAEIPRLKRASLKSEMIARACQLGEKPVLVDATAGLGHDSLLMAYLGAQIQLVERHPILFTLLEDSKAQAQRDPFLSQFMDRIQLIFADSASYLKQLDQEEKTVDVVYLDPMFPQRDQNQQAIKKQAQVKKQMQLLHLLLPEDGEMDLGGHLLELAKKVAKRVIVKRPRHAIFLANQEPAHQWQGDACRFDAYFQ.

S-adenosyl-L-methionine is bound by residues 138 to 139 (ER) and D194.

Belongs to the methyltransferase superfamily. RsmJ family.

It localises to the cytoplasm. The catalysed reaction is guanosine(1516) in 16S rRNA + S-adenosyl-L-methionine = N(2)-methylguanosine(1516) in 16S rRNA + S-adenosyl-L-homocysteine + H(+). Specifically methylates the guanosine in position 1516 of 16S rRNA. The sequence is that of Ribosomal RNA small subunit methyltransferase J from Acinetobacter baumannii (strain SDF).